We begin with the raw amino-acid sequence, 149 residues long: 3-hydroxyacyl-[acyl-carrier-protein] dehydratase FabZ (149 aa).

Residue His-53 is part of the active site.

It belongs to the thioester dehydratase family. FabZ subfamily.

It localises to the cytoplasm. It catalyses the reaction a (3R)-hydroxyacyl-[ACP] = a (2E)-enoyl-[ACP] + H2O. In terms of biological role, involved in unsaturated fatty acids biosynthesis. Catalyzes the dehydration of short chain beta-hydroxyacyl-ACPs and long chain saturated and unsaturated beta-hydroxyacyl-ACPs. This chain is 3-hydroxyacyl-[acyl-carrier-protein] dehydratase FabZ, found in Neisseria meningitidis serogroup B (strain ATCC BAA-335 / MC58).